The chain runs to 464 residues: Adenylyltransferase and sulfurtransferase MOCS3 (464 aa).

Residues Gly-101, Asp-122, 129 to 133 (NNMHR), Lys-146, and 190 to 191 (DN) each bind ATP. Cys-231 and Cys-234 together coordinate Zn(2+). The active-site Glycyl thioester intermediate; for adenylyltransferase activity is Cys-248. Zn(2+) is bound by residues Cys-306 and Cys-309. In terms of domain architecture, Rhodanese spans 358-462 (KKEQHVLLDV…WAANVNPNFP (105 aa)). Catalysis depends on Cys-422, which acts as the Cysteine persulfide intermediate; for sulfurtransferase activity.

This sequence in the N-terminal section; belongs to the HesA/MoeB/ThiF family. UBA4 subfamily. The cofactor is Zn(2+).

It localises to the cytoplasm. The enzyme catalyses [molybdopterin-synthase sulfur-carrier protein]-C-terminal Gly-Gly + ATP + H(+) = [molybdopterin-synthase sulfur-carrier protein]-C-terminal Gly-Gly-AMP + diphosphate. It catalyses the reaction [molybdopterin-synthase sulfur-carrier protein]-C-terminal Gly-Gly-AMP + S-sulfanyl-L-cysteinyl-[cysteine desulfurase] + AH2 = [molybdopterin-synthase sulfur-carrier protein]-C-terminal-Gly-aminoethanethioate + L-cysteinyl-[cysteine desulfurase] + A + AMP + 2 H(+). Its pathway is tRNA modification; 5-methoxycarbonylmethyl-2-thiouridine-tRNA biosynthesis. It functions in the pathway cofactor biosynthesis; molybdopterin biosynthesis. Its function is as follows. Plays a central role in 2-thiolation of mcm(5)S(2)U at tRNA wobble positions of cytosolic tRNA(Lys), tRNA(Glu) and tRNA(Gln). Also essential during biosynthesis of the molybdenum cofactor. Acts by mediating the C-terminal thiocarboxylation of sulfur carriers URM1 and MOCS2A. Its N-terminus first activates URM1 and MOCS2A as acyl-adenylates (-COAMP), then the persulfide sulfur on the catalytic cysteine is transferred to URM1 and MOCS2A to form thiocarboxylation (-COSH) of their C-terminus. The reaction probably involves hydrogen sulfide that is generated from the persulfide intermediate and that acts as a nucleophile towards URM1 and MOCS2A. Subsequently, a transient disulfide bond is formed. Does not use thiosulfate as sulfur donor; NFS1 probably acting as a sulfur donor for thiocarboxylation reactions. This chain is Adenylyltransferase and sulfurtransferase MOCS3, found in Arabidopsis thaliana (Mouse-ear cress).